A 255-amino-acid polypeptide reads, in one-letter code: Triosephosphate isomerase (255 aa).

9 to 11 (NWK) is a binding site for substrate. The active-site Electrophile is histidine 95. Glutamate 167 acts as the Proton acceptor in catalysis. Residues glycine 173, serine 212, and 233 to 234 (GG) each bind substrate.

This sequence belongs to the triosephosphate isomerase family. In terms of assembly, homodimer.

The protein resides in the cytoplasm. The enzyme catalyses D-glyceraldehyde 3-phosphate = dihydroxyacetone phosphate. The protein operates within carbohydrate biosynthesis; gluconeogenesis. Its pathway is carbohydrate degradation; glycolysis; D-glyceraldehyde 3-phosphate from glycerone phosphate: step 1/1. Involved in the gluconeogenesis. Catalyzes stereospecifically the conversion of dihydroxyacetone phosphate (DHAP) to D-glyceraldehyde-3-phosphate (G3P). The polypeptide is Triosephosphate isomerase (Yersinia pseudotuberculosis serotype O:1b (strain IP 31758)).